Reading from the N-terminus, the 297-residue chain is 4-hydroxy-tetrahydrodipicolinate synthase (297 aa).

T46 provides a ligand contact to pyruvate. Y134 acts as the Proton donor/acceptor in catalysis. K163 acts as the Schiff-base intermediate with substrate in catalysis. I205 provides a ligand contact to pyruvate.

Belongs to the DapA family. Homotetramer; dimer of dimers.

Its subcellular location is the cytoplasm. The enzyme catalyses L-aspartate 4-semialdehyde + pyruvate = (2S,4S)-4-hydroxy-2,3,4,5-tetrahydrodipicolinate + H2O + H(+). It functions in the pathway amino-acid biosynthesis; L-lysine biosynthesis via DAP pathway; (S)-tetrahydrodipicolinate from L-aspartate: step 3/4. In terms of biological role, catalyzes the condensation of (S)-aspartate-beta-semialdehyde [(S)-ASA] and pyruvate to 4-hydroxy-tetrahydrodipicolinate (HTPA). This chain is 4-hydroxy-tetrahydrodipicolinate synthase, found in Thermoanaerobacter pseudethanolicus (strain ATCC 33223 / 39E) (Clostridium thermohydrosulfuricum).